The chain runs to 307 residues: Ribonuclease Z (307 aa).

Residues His-63, His-65, Asp-67, His-68, His-143, Asp-213, and His-271 each coordinate Zn(2+). Asp-67 functions as the Proton acceptor in the catalytic mechanism.

The protein belongs to the RNase Z family. In terms of assembly, homodimer. The cofactor is Zn(2+).

The catalysed reaction is Endonucleolytic cleavage of RNA, removing extra 3' nucleotides from tRNA precursor, generating 3' termini of tRNAs. A 3'-hydroxy group is left at the tRNA terminus and a 5'-phosphoryl group is left at the trailer molecule.. In terms of biological role, zinc phosphodiesterase, which displays some tRNA 3'-processing endonuclease activity. Probably involved in tRNA maturation, by removing a 3'-trailer from precursor tRNA. This is Ribonuclease Z from Lactococcus lactis subsp. lactis (strain IL1403) (Streptococcus lactis).